The primary structure comprises 501 residues: Cytochrome P450 71D6 (501 aa).

Cys442 lines the heme pocket.

Belongs to the cytochrome P450 family. Requires heme as cofactor.

In Solanum chacoense (Chaco potato), this protein is Cytochrome P450 71D6 (CYP71D6).